We begin with the raw amino-acid sequence, 222 residues long: Small ribosomal subunit protein uS7m (222 aa).

The N-terminal 14 residues, 1–14 (MSKKLANFAQKRWI), are a transit peptide targeting the mitochondrion.

Belongs to the universal ribosomal protein uS7 family. Component of the mitochondrial ribosome small subunit (28S) which comprises a 12S rRNA and about 30 distinct proteins.

The protein resides in the mitochondrion. This Caenorhabditis briggsae protein is Small ribosomal subunit protein uS7m (mrps-7).